Here is an 89-residue protein sequence, read N- to C-terminus: MALEADVKKAIIDEYATHPGDTGSPEVQIALLTKRITGLTEHLKEHKHDHHTRRGLLLLVGQRRRLLGYLSNVDIERYRALIARLGIRR.

The protein belongs to the universal ribosomal protein uS15 family. In terms of assembly, part of the 30S ribosomal subunit. Forms a bridge to the 50S subunit in the 70S ribosome, contacting the 23S rRNA.

In terms of biological role, one of the primary rRNA binding proteins, it binds directly to 16S rRNA where it helps nucleate assembly of the platform of the 30S subunit by binding and bridging several RNA helices of the 16S rRNA. Functionally, forms an intersubunit bridge (bridge B4) with the 23S rRNA of the 50S subunit in the ribosome. This Clavibacter michiganensis subsp. michiganensis (strain NCPPB 382) protein is Small ribosomal subunit protein uS15.